A 249-amino-acid chain; its full sequence is Type III pantothenate kinase (249 aa).

6–13 contributes to the ATP binding site; sequence DIGNSRTK. Residues tyrosine 89 and 96–99 each bind substrate; that span reads GIDR. Aspartate 98 serves as the catalytic Proton acceptor. Residue aspartate 119 participates in K(+) binding. ATP is bound at residue threonine 122. Threonine 174 is a binding site for substrate.

It belongs to the type III pantothenate kinase family. As to quaternary structure, homodimer. It depends on NH4(+) as a cofactor. The cofactor is K(+).

It is found in the cytoplasm. It catalyses the reaction (R)-pantothenate + ATP = (R)-4'-phosphopantothenate + ADP + H(+). It participates in cofactor biosynthesis; coenzyme A biosynthesis; CoA from (R)-pantothenate: step 1/5. In terms of biological role, catalyzes the phosphorylation of pantothenate (Pan), the first step in CoA biosynthesis. This chain is Type III pantothenate kinase, found in Colwellia psychrerythraea (strain 34H / ATCC BAA-681) (Vibrio psychroerythus).